Here is a 258-residue protein sequence, read N- to C-terminus: Phosphate import ATP-binding protein PstB 2 (258 aa).

An ABC transporter domain is found at 12 to 253 (IQVRDLNFYY…PRQKQTEDYI (242 aa)). 44–51 (GPSGCGKS) is an ATP binding site.

Belongs to the ABC transporter superfamily. Phosphate importer (TC 3.A.1.7) family. As to quaternary structure, the complex is composed of two ATP-binding proteins (PstB), two transmembrane proteins (PstC and PstA) and a solute-binding protein (PstS).

The protein resides in the cell inner membrane. It carries out the reaction phosphate(out) + ATP + H2O = ADP + 2 phosphate(in) + H(+). Functionally, part of the ABC transporter complex PstSACB involved in phosphate import. Responsible for energy coupling to the transport system. This chain is Phosphate import ATP-binding protein PstB 2, found in Pectobacterium atrosepticum (strain SCRI 1043 / ATCC BAA-672) (Erwinia carotovora subsp. atroseptica).